We begin with the raw amino-acid sequence, 304 residues long: N-acetyl-D-glucosamine kinase (304 aa).

Residues 4-11 and 133-140 each bind ATP; these read GFDMGGTK and GVGGGLIV. Residues His157, Cys177, Cys179, and Cys184 each contribute to the Zn(2+) site.

Belongs to the ROK (NagC/XylR) family. NagK subfamily.

The catalysed reaction is N-acetyl-D-glucosamine + ATP = N-acetyl-D-glucosamine 6-phosphate + ADP + H(+). It functions in the pathway cell wall biogenesis; peptidoglycan recycling. Functionally, catalyzes the phosphorylation of N-acetyl-D-glucosamine (GlcNAc) derived from cell-wall degradation, yielding GlcNAc-6-P. The protein is N-acetyl-D-glucosamine kinase of Yersinia pseudotuberculosis serotype IB (strain PB1/+).